The following is an 807-amino-acid chain: DNA gyrase subunit B (807 aa).

Residues 429–543 (SELFIVEGDS…KGYLYIAQPP (115 aa)) form the Toprim domain. The Mg(2+) site is built by E435, D508, and D510.

The protein belongs to the type II topoisomerase GyrB family. As to quaternary structure, heterotetramer, composed of two GyrA and two GyrB chains. In the heterotetramer, GyrA contains the active site tyrosine that forms a transient covalent intermediate with DNA, while GyrB binds cofactors and catalyzes ATP hydrolysis. Mg(2+) is required as a cofactor. It depends on Mn(2+) as a cofactor. The cofactor is Ca(2+).

It is found in the cytoplasm. It carries out the reaction ATP-dependent breakage, passage and rejoining of double-stranded DNA.. A type II topoisomerase that negatively supercoils closed circular double-stranded (ds) DNA in an ATP-dependent manner to modulate DNA topology and maintain chromosomes in an underwound state. Negative supercoiling favors strand separation, and DNA replication, transcription, recombination and repair, all of which involve strand separation. Also able to catalyze the interconversion of other topological isomers of dsDNA rings, including catenanes and knotted rings. Type II topoisomerases break and join 2 DNA strands simultaneously in an ATP-dependent manner. The protein is DNA gyrase subunit B of Rickettsia prowazekii (strain Madrid E).